The primary structure comprises 139 residues: Small ribosomal subunit protein bS6 (139 aa).

Positions 118–139 (SFKGGSKIETPTGSESTDIQEK) are disordered. Residues 126-139 (ETPTGSESTDIQEK) show a composition bias toward polar residues.

It belongs to the bacterial ribosomal protein bS6 family.

Binds together with bS18 to 16S ribosomal RNA. The protein is Small ribosomal subunit protein bS6 of Borrelia garinii subsp. bavariensis (strain ATCC BAA-2496 / DSM 23469 / PBi) (Borreliella bavariensis).